Consider the following 602-residue polypeptide: Protein nessun dorma (602 aa).

Residues 188–208 are a coiled coil; it reads AEAKYIQQRLDYLELDLSDAE.

As to quaternary structure, interacts (via N-terminus) with both members of the centralspindlin complex, Pav and Tum. Detected in testis (at protein level). Also expressed in ovary.

It is found in the midbody. In terms of biological role, required during male meiosis for completion of spermatocyte cytokinesis and possibly also required in female germline cells. Also involved in ring canal formation in male and female germline cells. Not essential for cleavage furrow ingression but is required for contractile ring stability and the attachment of the furrowing membrane to the actomyosin ring in late telophase. Displays high binding affinity for beta-galactosides. The sequence is that of Protein nessun dorma from Drosophila melanogaster (Fruit fly).